The chain runs to 500 residues: Glutathione reductase (500 aa).

Residues Ser12 and Gly13 each coordinate FAD. Ser12 is a glutathione binding site. Arg19 contacts glutathione. FAD-binding residues include Glu32, Thr39, Cys40, and Lys48. Cys40 and Cys45 are oxidised to a cystine. Glutathione is bound at residue Tyr95. Position 111 (Ala111) interacts with FAD. NADP(+) is bound by residues Ile187, Glu190, Arg207, Arg213, and Gly272. FAD-binding residues include Asp312 and Thr354. Arg362 provides a ligand contact to glutathione. Val384 contributes to the NADP(+) binding site. His485 contacts FAD. The active-site Proton acceptor is His485.

This sequence belongs to the class-I pyridine nucleotide-disulfide oxidoreductase family. Homodimer. FAD serves as cofactor.

It is found in the cytoplasm. The catalysed reaction is 2 glutathione + NADP(+) = glutathione disulfide + NADPH + H(+). In terms of biological role, catalyzes the reduction of glutathione disulfide (GSSG) to reduced glutathione (GSH). Constitutes the major mechanism to maintain a high GSH:GSSG ratio in the cytosol. The protein is Glutathione reductase of Plasmodium falciparum (isolate K1 / Thailand).